We begin with the raw amino-acid sequence, 767 residues long: Cullin-1 (767 aa).

A Cullin neddylation domain is found at Asp699–Arg760. A Glycyl lysine isopeptide (Lys-Gly) (interchain with G-Cter in NEDD8) cross-link involves residue Lys713.

This sequence belongs to the cullin family. Component of multiple Cul1-RING E3 ubiquitin-protein ligase complexes commonly known as SCF (SKP1-CUL1-F-box) complexes, consisting of cul1, skp1, pip1 and a variable F-box domain-containing protein as substrate-specific subunit. Binds to the pop1 homodimer, the pop2 homodimer and the pop1/pop2 heterodimer forming the SCF(pop1-pop2) complex. Interacts with pof3, pof14 and skp1. Neddylated; enhancing the ubiquitin-ligase activity.

The protein localises to the cytoplasm. It functions in the pathway protein modification; protein ubiquitination. Core component of multiple cullin-RING-based SCF (SKP1-CUL1-F-box protein) E3 ubiquitin-protein ligase complexes, which mediate the ubiquitination of target proteins. The functional specificity of the SCF complex depends on the F-box protein as substrate recognition component. SCF(pop1-pop2) is required for the maintenance of ploidy and directs ubiquitination of cig2. The polypeptide is Cullin-1 (cul1) (Schizosaccharomyces pombe (strain 972 / ATCC 24843) (Fission yeast)).